A 226-amino-acid polypeptide reads, in one-letter code: Phosphoribosylformylglycinamidine synthase subunit PurQ (226 aa).

The Glutamine amidotransferase type-1 domain maps to 3-225; that stretch reads FAVIVFPGSN…VKWGARHVTY (223 aa). Cys86 (nucleophile) is an active-site residue. Active-site residues include His194 and Glu196.

Part of the FGAM synthase complex composed of 1 PurL, 1 PurQ and 2 PurS subunits.

It is found in the cytoplasm. It carries out the reaction N(2)-formyl-N(1)-(5-phospho-beta-D-ribosyl)glycinamide + L-glutamine + ATP + H2O = 2-formamido-N(1)-(5-O-phospho-beta-D-ribosyl)acetamidine + L-glutamate + ADP + phosphate + H(+). The catalysed reaction is L-glutamine + H2O = L-glutamate + NH4(+). It participates in purine metabolism; IMP biosynthesis via de novo pathway; 5-amino-1-(5-phospho-D-ribosyl)imidazole from N(2)-formyl-N(1)-(5-phospho-D-ribosyl)glycinamide: step 1/2. In terms of biological role, part of the phosphoribosylformylglycinamidine synthase complex involved in the purines biosynthetic pathway. Catalyzes the ATP-dependent conversion of formylglycinamide ribonucleotide (FGAR) and glutamine to yield formylglycinamidine ribonucleotide (FGAM) and glutamate. The FGAM synthase complex is composed of three subunits. PurQ produces an ammonia molecule by converting glutamine to glutamate. PurL transfers the ammonia molecule to FGAR to form FGAM in an ATP-dependent manner. PurS interacts with PurQ and PurL and is thought to assist in the transfer of the ammonia molecule from PurQ to PurL. The chain is Phosphoribosylformylglycinamidine synthase subunit PurQ from Exiguobacterium sp. (strain ATCC BAA-1283 / AT1b).